We begin with the raw amino-acid sequence, 354 residues long: MKKIIMTGGGTAGHVTPNLALVPELKKSGYEIKYIGSIEGIERKIIEKEGIEYFPISSGKLRRYFDLKNFSDPFKVLKGVFQAKKIIKREKPDIVFSKGGFVTVPVVIAAHLNKIPVIAHESDITPGLANKLATPYCTRVCVTFPESVKHIKGDKAVLTGTPIRRELLEGNKLEGIKLCGFKDNKPILLIIGGSLGSKIINEIVRKNLDNILSKFNIIHICGKSNLDENLENRKGYAQFEYVNEELPDLMKASDLVISRAGANVIYELLALKKPNLLIPLSKKSSRGDQILNAASFEKSGYSLVLKEEELEDKTLMKKLNYLYENRNVYINNMSKSKMDNGVKNITELIKKYTK.

UDP-N-acetyl-alpha-D-glucosamine-binding positions include 11-13 (TAG), Arg164, Ser194, and Gln289.

Belongs to the glycosyltransferase 28 family. MurG subfamily.

It is found in the cell membrane. The catalysed reaction is di-trans,octa-cis-undecaprenyl diphospho-N-acetyl-alpha-D-muramoyl-L-alanyl-D-glutamyl-meso-2,6-diaminopimeloyl-D-alanyl-D-alanine + UDP-N-acetyl-alpha-D-glucosamine = di-trans,octa-cis-undecaprenyl diphospho-[N-acetyl-alpha-D-glucosaminyl-(1-&gt;4)]-N-acetyl-alpha-D-muramoyl-L-alanyl-D-glutamyl-meso-2,6-diaminopimeloyl-D-alanyl-D-alanine + UDP + H(+). It functions in the pathway cell wall biogenesis; peptidoglycan biosynthesis. In terms of biological role, cell wall formation. Catalyzes the transfer of a GlcNAc subunit on undecaprenyl-pyrophosphoryl-MurNAc-pentapeptide (lipid intermediate I) to form undecaprenyl-pyrophosphoryl-MurNAc-(pentapeptide)GlcNAc (lipid intermediate II). The sequence is that of UDP-N-acetylglucosamine--N-acetylmuramyl-(pentapeptide) pyrophosphoryl-undecaprenol N-acetylglucosamine transferase from Clostridium botulinum (strain Langeland / NCTC 10281 / Type F).